Here is a 141-residue protein sequence, read N- to C-terminus: ATP synthase epsilon chain, chloroplastic (141 aa).

The protein belongs to the ATPase epsilon chain family. F-type ATPases have 2 components, F(1) - the catalytic core - and F(0) - the membrane proton channel. F(1) has five subunits: alpha(3), beta(3), gamma(1), delta(1), epsilon(1). F(0) has four main subunits: a(1), b(1), b'(1) and c(10-14). The alpha and beta chains form an alternating ring which encloses part of the gamma chain. F(1) is attached to F(0) by a central stalk formed by the gamma and epsilon chains, while a peripheral stalk is formed by the delta, b and b' chains.

The protein localises to the plastid. It localises to the chloroplast thylakoid membrane. F(1)F(0) ATP synthase produces ATP from ADP in the presence of a proton or sodium gradient. F-type ATPases consist of two structural domains, F(1) containing the extramembraneous catalytic core and F(0) containing the membrane proton channel, linked together by a central stalk and a peripheral stalk. During catalysis, ATP synthesis in the catalytic domain of F(1) is coupled via a rotary mechanism of the central stalk subunits to proton translocation. The polypeptide is ATP synthase epsilon chain, chloroplastic (Chlamydomonas reinhardtii (Chlamydomonas smithii)).